Reading from the N-terminus, the 381-residue chain is Alkanesulfonate monooxygenase (381 aa).

It belongs to the SsuD family. In terms of assembly, homotetramer.

It carries out the reaction an alkanesulfonate + FMNH2 + O2 = an aldehyde + FMN + sulfite + H2O + 2 H(+). Catalyzes the desulfonation of aliphatic sulfonates. The chain is Alkanesulfonate monooxygenase from Escherichia coli O6:K15:H31 (strain 536 / UPEC).